The sequence spans 412 residues: Putative competence-damage inducible protein (412 aa).

It belongs to the CinA family.

The protein is Putative competence-damage inducible protein of Bacillus cereus (strain ATCC 14579 / DSM 31 / CCUG 7414 / JCM 2152 / NBRC 15305 / NCIMB 9373 / NCTC 2599 / NRRL B-3711).